Here is a 477-residue protein sequence, read N- to C-terminus: 3-isopropylmalate dehydratase large subunit (477 aa).

[4Fe-4S] cluster is bound by residues cysteine 352, cysteine 413, and cysteine 416.

Belongs to the aconitase/IPM isomerase family. LeuC type 1 subfamily. In terms of assembly, heterodimer of LeuC and LeuD. [4Fe-4S] cluster is required as a cofactor.

The enzyme catalyses (2R,3S)-3-isopropylmalate = (2S)-2-isopropylmalate. Its pathway is amino-acid biosynthesis; L-leucine biosynthesis; L-leucine from 3-methyl-2-oxobutanoate: step 2/4. Its function is as follows. Catalyzes the isomerization between 2-isopropylmalate and 3-isopropylmalate, via the formation of 2-isopropylmaleate. This is 3-isopropylmalate dehydratase large subunit from Pseudomonas entomophila (strain L48).